Here is a 279-residue protein sequence, read N- to C-terminus: MLIQLCLTLFFLGCSIAGTPAPGPEDVLMGIVGGHSAPQGKWPWQVSLRIYRYYWAFWVHNCGGSIIHPQWVLTAAHCIRERDADPSVFRIRVGEAYLYGGKELLSVSRVIIHPDFVHAGLGSDVALLQLAVSVQSFPNVKPVKLPSESLEVTKKDVCWVTGWGAVSTHRSLPPPYRLQQVQVKIIDNSLCEEMYHNATRHRNRGQKLILKDMLCAGNQGQDSCYGDSGGPLVCNVTGSWTLVGVVSWGYGCALRDFPGVYARVQSFLPWITQQMQRFS.

Residues 1-17 (MLIQLCLTLFFLGCSIA) form the signal peptide. Residues 31-276 (IVGGHSAPQG…FLPWITQQMQ (246 aa)) form the Peptidase S1 domain. C62 and C78 are disulfide-bonded. Residues H77 and D124 each act as charge relay system in the active site. Cystine bridges form between C158–C234, C191–C215, and C224–C252. The N-linked (GlcNAc...) asparagine glycan is linked to N197. The active-site Charge relay system is the S228. N235 carries an N-linked (GlcNAc...) asparagine glycan.

The protein belongs to the peptidase S1 family. In terms of assembly, homooligomer, heterodimer and heterotetramer. Able to form homo- and hetero- tetrameric structures. Heterotetramer is far more stable than the homotetramer. In terms of tissue distribution, expressed in embryos and placenta. Found in uterus especially in glandular epithelium during zona lysis and implantation.

It is found in the secreted. Functionally, involved in embryo hatching and implantation. The polypeptide is Serine protease 29 (Prss29) (Mus musculus (Mouse)).